Consider the following 408-residue polypeptide: 2-acyl-4-prenylphloroglucinol 6-prenyltransferase, chloroplastic (408 aa).

The N-terminal 46 residues, 1–46 (MELSSACNLSLKPNYYYYPTSLFPSNNSYNNLKASSYYQTQRPIKC), are a transit peptide targeting the chloroplast. Transmembrane regions (helical) follow at residues 119 to 139 (PIPF…ELLK), 146 to 166 (WQLM…HIYI), 193 to 213 (SVKS…LLMI), 217 to 237 (CGLF…MYSV), 257 to 277 (IGIG…GLPF), 281 to 301 (PPFT…SILK), 326 to 346 (IVLV…GVAI), 355 to 375 (YIMI…TWLL), and 388 to 408 (YYHF…FIST).

The protein belongs to the UbiA prenyltransferase family. Homo- and heteromer. Interacts with PT1L, forming a functional metabolon. Requires Mg(2+) as cofactor. Expressed in trichomes.

The protein localises to the plastid. It is found in the chloroplast membrane. The catalysed reaction is a 2-acyl-4-prenylphloroglucinol + dimethylallyl diphosphate = a 2-acyl-4,6-diprenylphloroglucinol + diphosphate. It catalyses the reaction a 2-acyl-4,6-diprenylphloroglucinol + dimethylallyl diphosphate = a 2-acyl-4,6,6-triprenylphloroglucinol + diphosphate. Its pathway is secondary metabolite biosynthesis. Its function is as follows. Involved in the biosynthesis of prenylated phenolics natural products which contribute to the bitter taste of beer and display broad biological activities. Catalyzes the two last prenylation steps in the beta-bitter acid pathway. Uses dimethylallyl diphosphate (DMAPP) as the prenyl donor. This chain is 2-acyl-4-prenylphloroglucinol 6-prenyltransferase, chloroplastic, found in Humulus lupulus (European hop).